Here is a 291-residue protein sequence, read N- to C-terminus: 4-hydroxy-tetrahydrodipicolinate synthase (291 aa).

Residue Thr-45 participates in pyruvate binding. Tyr-133 serves as the catalytic Proton donor/acceptor. Lys-161 serves as the catalytic Schiff-base intermediate with substrate. Ile-203 contributes to the pyruvate binding site.

It belongs to the DapA family. Homotetramer; dimer of dimers.

The protein resides in the cytoplasm. It carries out the reaction L-aspartate 4-semialdehyde + pyruvate = (2S,4S)-4-hydroxy-2,3,4,5-tetrahydrodipicolinate + H2O + H(+). The protein operates within amino-acid biosynthesis; L-lysine biosynthesis via DAP pathway; (S)-tetrahydrodipicolinate from L-aspartate: step 3/4. In terms of biological role, catalyzes the condensation of (S)-aspartate-beta-semialdehyde [(S)-ASA] and pyruvate to 4-hydroxy-tetrahydrodipicolinate (HTPA). This Laribacter hongkongensis (strain HLHK9) protein is 4-hydroxy-tetrahydrodipicolinate synthase.